Here is a 250-residue protein sequence, read N- to C-terminus: Hydroxyacylglutathione hydrolase (250 aa).

Zn(2+)-binding residues include His53, His55, Asp57, His58, His110, Asp127, and His165.

This sequence belongs to the metallo-beta-lactamase superfamily. Glyoxalase II family. Monomer. It depends on Zn(2+) as a cofactor.

It catalyses the reaction an S-(2-hydroxyacyl)glutathione + H2O = a 2-hydroxy carboxylate + glutathione + H(+). It participates in secondary metabolite metabolism; methylglyoxal degradation; (R)-lactate from methylglyoxal: step 2/2. Thiolesterase that catalyzes the hydrolysis of S-D-lactoyl-glutathione to form glutathione and D-lactic acid. The protein is Hydroxyacylglutathione hydrolase of Buchnera aphidicola subsp. Schizaphis graminum (strain Sg).